Reading from the N-terminus, the 312-residue chain is Glyoxylate/hydroxypyruvate reductase A (312 aa).

Arg227 is an active-site residue. Catalysis depends on His275, which acts as the Proton donor.

This sequence belongs to the D-isomer specific 2-hydroxyacid dehydrogenase family. GhrA subfamily.

The protein localises to the cytoplasm. The enzyme catalyses glycolate + NADP(+) = glyoxylate + NADPH + H(+). The catalysed reaction is (R)-glycerate + NAD(+) = 3-hydroxypyruvate + NADH + H(+). It catalyses the reaction (R)-glycerate + NADP(+) = 3-hydroxypyruvate + NADPH + H(+). Functionally, catalyzes the NADPH-dependent reduction of glyoxylate and hydroxypyruvate into glycolate and glycerate, respectively. The polypeptide is Glyoxylate/hydroxypyruvate reductase A (Klebsiella pneumoniae subsp. pneumoniae (strain ATCC 700721 / MGH 78578)).